A 320-amino-acid polypeptide reads, in one-letter code: o-succinylbenzoate synthase (320 aa).

Lys133 acts as the Proton donor in catalysis. Positions 161, 190, and 213 each coordinate Mg(2+). The active-site Proton acceptor is the Lys235.

The protein belongs to the mandelate racemase/muconate lactonizing enzyme family. MenC type 1 subfamily. A divalent metal cation serves as cofactor.

It carries out the reaction (1R,6R)-6-hydroxy-2-succinyl-cyclohexa-2,4-diene-1-carboxylate = 2-succinylbenzoate + H2O. Its pathway is quinol/quinone metabolism; 1,4-dihydroxy-2-naphthoate biosynthesis; 1,4-dihydroxy-2-naphthoate from chorismate: step 4/7. It participates in quinol/quinone metabolism; menaquinone biosynthesis. Its function is as follows. Converts 2-succinyl-6-hydroxy-2,4-cyclohexadiene-1-carboxylate (SHCHC) to 2-succinylbenzoate (OSB). The chain is o-succinylbenzoate synthase from Escherichia coli O81 (strain ED1a).